The following is a 257-amino-acid chain: 5'-nucleotidase SurE (257 aa).

The a divalent metal cation site is built by Asp8, Asp9, Ser40, and Asn93.

This sequence belongs to the SurE nucleotidase family. The cofactor is a divalent metal cation.

Its subcellular location is the cytoplasm. It carries out the reaction a ribonucleoside 5'-phosphate + H2O = a ribonucleoside + phosphate. In terms of biological role, nucleotidase that shows phosphatase activity on nucleoside 5'-monophosphates. In Phenylobacterium zucineum (strain HLK1), this protein is 5'-nucleotidase SurE.